A 242-amino-acid chain; its full sequence is Myogenic factor 6 (242 aa).

The interval Ser-31–Leu-63 is disordered. Polar residues predominate over residues Gly-39–Ser-56. The region spanning Asp-93 to Leu-144 is the bHLH domain.

As to quaternary structure, efficient DNA binding requires dimerization with another bHLH protein. Interacts with CSRP3. As to expression, skeletal muscle.

The protein localises to the nucleus. Involved in muscle differentiation (myogenic factor). Induces fibroblasts to differentiate into myoblasts. Probable sequence specific DNA-binding protein. This is Myogenic factor 6 (Myf6) from Mus musculus (Mouse).